The following is a 205-amino-acid chain: E3 ubiquitin-protein ligase complex slx8-rfp subunit rfp2 (205 aa).

An RING-type; degenerate zinc finger spans residues Cys147–His190.

As to quaternary structure, part of an E3 ubiquitin complex including rfp1, rfp2 and slx8. Interacts with slx8.

Its subcellular location is the nucleus. It catalyses the reaction S-ubiquitinyl-[E2 ubiquitin-conjugating enzyme]-L-cysteine + [acceptor protein]-L-lysine = [E2 ubiquitin-conjugating enzyme]-L-cysteine + N(6)-ubiquitinyl-[acceptor protein]-L-lysine.. The protein operates within protein modification; protein ubiquitination. Mediates ubiquitination and subsequent desumoylation/degradation of sumoylated proteins and proteins containing SUMO-like domains. Involved in maintaining genome stability where it acts in the cellular response to DNA damage. In Schizosaccharomyces pombe (strain 972 / ATCC 24843) (Fission yeast), this protein is E3 ubiquitin-protein ligase complex slx8-rfp subunit rfp2 (rfp2).